Here is an 86-residue protein sequence, read N- to C-terminus: ATP synthase subunit c (86 aa).

The next 2 membrane-spanning stretches (helical) occupy residues 8–28 (VLAA…GAGI) and 66–86 (GIYA…IGML).

This sequence belongs to the ATPase C chain family. In terms of assembly, F-type ATPases have 2 components, F(1) - the catalytic core - and F(0) - the membrane proton channel. F(1) has five subunits: alpha(3), beta(3), gamma(1), delta(1), epsilon(1). F(0) has three main subunits: a(1), b(2) and c(10-14). The alpha and beta chains form an alternating ring which encloses part of the gamma chain. F(1) is attached to F(0) by a central stalk formed by the gamma and epsilon chains, while a peripheral stalk is formed by the delta and b chains.

It localises to the cell membrane. Functionally, f(1)F(0) ATP synthase produces ATP from ADP in the presence of a proton or sodium gradient. F-type ATPases consist of two structural domains, F(1) containing the extramembraneous catalytic core and F(0) containing the membrane proton channel, linked together by a central stalk and a peripheral stalk. During catalysis, ATP synthesis in the catalytic domain of F(1) is coupled via a rotary mechanism of the central stalk subunits to proton translocation. Key component of the F(0) channel; it plays a direct role in translocation across the membrane. A homomeric c-ring of between 10-14 subunits forms the central stalk rotor element with the F(1) delta and epsilon subunits. This chain is ATP synthase subunit c, found in Natranaerobius thermophilus (strain ATCC BAA-1301 / DSM 18059 / JW/NM-WN-LF).